The sequence spans 309 residues: Lipoyl synthase (309 aa).

Residues Cys-56, Cys-61, Cys-67, Cys-82, Cys-86, Cys-89, and Ser-296 each contribute to the [4Fe-4S] cluster site. Positions 68-285 constitute a Radical SAM core domain; the sequence is FKRGTATFMI…RVAGLKMGFS (218 aa).

Belongs to the radical SAM superfamily. Lipoyl synthase family. [4Fe-4S] cluster serves as cofactor.

It is found in the cytoplasm. It catalyses the reaction [[Fe-S] cluster scaffold protein carrying a second [4Fe-4S](2+) cluster] + N(6)-octanoyl-L-lysyl-[protein] + 2 oxidized [2Fe-2S]-[ferredoxin] + 2 S-adenosyl-L-methionine + 4 H(+) = [[Fe-S] cluster scaffold protein] + N(6)-[(R)-dihydrolipoyl]-L-lysyl-[protein] + 4 Fe(3+) + 2 hydrogen sulfide + 2 5'-deoxyadenosine + 2 L-methionine + 2 reduced [2Fe-2S]-[ferredoxin]. It functions in the pathway protein modification; protein lipoylation via endogenous pathway; protein N(6)-(lipoyl)lysine from octanoyl-[acyl-carrier-protein]: step 2/2. Functionally, catalyzes the radical-mediated insertion of two sulfur atoms into the C-6 and C-8 positions of the octanoyl moiety bound to the lipoyl domains of lipoate-dependent enzymes, thereby converting the octanoylated domains into lipoylated derivatives. The sequence is that of Lipoyl synthase from Syntrophotalea carbinolica (strain DSM 2380 / NBRC 103641 / GraBd1) (Pelobacter carbinolicus).